The chain runs to 121 residues: MARIAGINIPPHQHTEIGLTAIYGIGRTRARKICEACGIAYSKKVKELTDADLEKIRDQIAQFTIEGDLRRETTMNIKRLMDIGCYRGFRHRRGLPMRGQRTRTNARTRKGPRKGAAALKK.

A disordered region spans residues 93–121 (RGLPMRGQRTRTNARTRKGPRKGAAALKK).

This sequence belongs to the universal ribosomal protein uS13 family. Part of the 30S ribosomal subunit. Forms a loose heterodimer with protein S19. Forms two bridges to the 50S subunit in the 70S ribosome.

Its function is as follows. Located at the top of the head of the 30S subunit, it contacts several helices of the 16S rRNA. In the 70S ribosome it contacts the 23S rRNA (bridge B1a) and protein L5 of the 50S subunit (bridge B1b), connecting the 2 subunits; these bridges are implicated in subunit movement. Contacts the tRNAs in the A and P-sites. This chain is Small ribosomal subunit protein uS13, found in Acidovorax ebreus (strain TPSY) (Diaphorobacter sp. (strain TPSY)).